We begin with the raw amino-acid sequence, 124 residues long: Small ribosomal subunit protein uS12 (124 aa).

D89 bears the 3-methylthioaspartic acid mark. The tract at residues 105–124 (SGVSDRRQGRSKYGAKRPKS) is disordered. Positions 113 to 124 (GRSKYGAKRPKS) are enriched in basic residues.

It belongs to the universal ribosomal protein uS12 family. As to quaternary structure, part of the 30S ribosomal subunit. Contacts proteins S8 and S17. May interact with IF1 in the 30S initiation complex.

Functionally, with S4 and S5 plays an important role in translational accuracy. Interacts with and stabilizes bases of the 16S rRNA that are involved in tRNA selection in the A site and with the mRNA backbone. Located at the interface of the 30S and 50S subunits, it traverses the body of the 30S subunit contacting proteins on the other side and probably holding the rRNA structure together. The combined cluster of proteins S8, S12 and S17 appears to hold together the shoulder and platform of the 30S subunit. In Colwellia psychrerythraea (strain 34H / ATCC BAA-681) (Vibrio psychroerythus), this protein is Small ribosomal subunit protein uS12.